Here is a 238-residue protein sequence, read N- to C-terminus: Uridylate kinase (238 aa).

12 to 15 (KLSG) provides a ligand contact to ATP. Glycine 54 lines the UMP pocket. Residues glycine 55 and arginine 59 each contribute to the ATP site. UMP is bound by residues aspartate 74 and 135–142 (TGNPYFST). Positions 168 and 171 each coordinate ATP.

It belongs to the UMP kinase family. In terms of assembly, homohexamer.

The protein resides in the cytoplasm. It catalyses the reaction UMP + ATP = UDP + ADP. The protein operates within pyrimidine metabolism; CTP biosynthesis via de novo pathway; UDP from UMP (UMPK route): step 1/1. Inhibited by UTP. Functionally, catalyzes the reversible phosphorylation of UMP to UDP. The protein is Uridylate kinase of Syntrophomonas wolfei subsp. wolfei (strain DSM 2245B / Goettingen).